A 417-amino-acid polypeptide reads, in one-letter code: MEVNPPKQEHLLALKVMRLTKPTLFTNIPVTCEERDLPGDLFNQLMRDDPSTVNGAEVLMLGEMLTLPQNFGNIFLGETFSSYISVHNDSNQVVKDILVKADLQTSSQRLNLSASNAAVAELKPDCCIDDVIHHEVKEIGTHILVCAVSYTTQAGEKMYFRKFFKFQVLKPLDVKTKFYNAESDLSSVTDEVFLEAQIQNMTTSPMFMEKVSLEPSIMYNVTELNSVSQAGESVSTFGSRAYLQPMDTRQYLYCLKPKKEFAEKAGIIKGVTVIGKLDIVWKTNLGERGRLQTSQLQRMAPGYGDVRLSLEAIPDTVNLEEPFHITCKITNCSERTMDLVLEMCNTNSIHWCGISGRQLGKLHPSSSLCLALTLLSSVQGLQSISGLRLTDTFLKRTYEYDDIAQVCVISSAIKVES.

Belongs to the TRAPPC13 family. Part of the multisubunit TRAPP (transport protein particle) complex.

The sequence is that of Trafficking protein particle complex subunit 13 (TRAPPC13) from Pongo abelii (Sumatran orangutan).